The sequence spans 343 residues: tRNA N6-adenosine threonylcarbamoyltransferase (343 aa).

Residues H111 and H115 each coordinate Fe cation. Residues 133 to 137, D166, G179, D183, and N273 contribute to the substrate site; that span reads AVSGG. D301 provides a ligand contact to Fe cation.

Belongs to the KAE1 / TsaD family. Requires Fe(2+) as cofactor.

It localises to the cytoplasm. The enzyme catalyses L-threonylcarbamoyladenylate + adenosine(37) in tRNA = N(6)-L-threonylcarbamoyladenosine(37) in tRNA + AMP + H(+). Required for the formation of a threonylcarbamoyl group on adenosine at position 37 (t(6)A37) in tRNAs that read codons beginning with adenine. Is involved in the transfer of the threonylcarbamoyl moiety of threonylcarbamoyl-AMP (TC-AMP) to the N6 group of A37, together with TsaE and TsaB. TsaD likely plays a direct catalytic role in this reaction. The polypeptide is tRNA N6-adenosine threonylcarbamoyltransferase (Geotalea uraniireducens (strain Rf4) (Geobacter uraniireducens)).